The primary structure comprises 147 residues: Angiogenin (147 aa).

An N-terminal signal peptide occupies residues 1–24 (MVMGLGVLLLVFVLGLGLTPPTLA). Gln-25 carries the post-translational modification Pyrrolidone carboxylic acid. Residue His-37 is the Proton acceptor of the active site. 2 residues coordinate tRNA: Arg-45 and Asp-46. 3 disulfide bridges follow: Cys-50-Cys-105, Cys-63-Cys-116, and Cys-81-Cys-131. The Nucleolar localization signal motif lies at 55 to 59 (RRRGL). 2 residues coordinate tRNA: Cys-105 and Val-127. Catalysis depends on His-138, which acts as the Proton donor.

It belongs to the pancreatic ribonuclease family. In terms of assembly, homodimer. Interacts with RNH1; inhibiting ANG ribonuclease activity. Interacts with PCNA.

It is found in the secreted. Its subcellular location is the nucleus. The protein localises to the nucleolus. The protein resides in the cytoplasm. It localises to the stress granule. Its activity is regulated as follows. Has weak tRNA ribonuclease activity by itself due to partial autoinhibition by its C-terminus, which folds into a short alpha-helix that partially occludes the substrate-binding site. In absence of stress, the ribonuclease activity is inhibited by RNH1 in the cytoplasm. In response to stress, dissociates from RNH1 in the cytoplasm and associates with cytoplasmic ribosomes with vacant A-sites: ribosomes directly activate the tRNA ribonuclease activity of ANG by refolding the C-terminal alpha-helix. In response to stress, the angiogenic activity of ANG is inhibited by RNH1 in the nucleus. In terms of biological role, secreted ribonuclease that can either promote or restrict cell proliferation of target cells, depending on the context. Endocytosed in target cells via its receptor PLXNB2 and translocates to the cytoplasm or nucleus. Under stress conditions, localizes to the cytoplasm and promotes the assembly of stress granules (SGs): specifically cleaves a subset of tRNAs within anticodon loops to produce tRNA-derived stress-induced fragments (tiRNAs), resulting in translation repression and inhibition of cell proliferation. tiRNas also prevent formation of apoptosome, thereby promoting cell survival. Preferentially cleaves RNAs between a pyrimidine and an adenosine residue, suggesting that it cleaves the anticodon loop of tRNA(Ala) (32-UUAGCAU-38) after positions 33 and 36. Cleaves a subset of tRNAs, including tRNA(Ala), tRNA(Glu), tRNA(Gly), tRNA(Lys), tRNA(Val), tRNA(His), tRNA(Asp) and tRNA(Sec). Under growth conditions and in differentiated cells, translocates to the nucleus and stimulates ribosomal RNA (rRNA) transcription, including that containing the initiation site sequences of 45S rRNA, thereby promoting cell growth and proliferation. Angiogenin induces vascularization of normal and malignant tissues via its ability to promote rRNA transcription. Involved in hematopoietic stem and progenitor cell (HSPC) growth and survival by promoting rRNA transcription in growth conditions and inhibiting translation in response to stress, respectively. Mediates the crosstalk between myeloid and intestinal epithelial cells to protect the intestinal epithelial barrier integrity: secreted by myeloid cells and promotes intestinal epithelial cells proliferation and survival. Also mediates osteoclast-endothelial cell crosstalk in growing bone: produced by osteoclasts and protects the neighboring vascular cells against senescence by promoting rRNA transcription. The protein is Angiogenin (ANG) of Pan troglodytes (Chimpanzee).